A 172-amino-acid polypeptide reads, in one-letter code: Small ribosomal subunit protein uS5 (172 aa).

The region spanning 11–74 (LFESVVDIAR…RKAKGAMIRF (64 aa)) is the S5 DRBM domain.

The protein belongs to the universal ribosomal protein uS5 family. As to quaternary structure, part of the 30S ribosomal subunit. Contacts proteins S4 and S8.

Its function is as follows. With S4 and S12 plays an important role in translational accuracy. Functionally, located at the back of the 30S subunit body where it stabilizes the conformation of the head with respect to the body. The chain is Small ribosomal subunit protein uS5 from Neorickettsia sennetsu (strain ATCC VR-367 / Miyayama) (Ehrlichia sennetsu).